The sequence spans 235 residues: MTELARLKFYATQPHPCSYLPEEQATTLFLDPSQPMDTQLYASLSEVGFRRSGDHLYRPHCQHCTACIAARIPVADFSPNRQQRRILKRNAELQVIRKRPSFNEEYYDLYRRYIEQRHADGDMYPPSRDQFATFLVRDLPFCCFFEFRLHGRLLAIAVTDVLPNGLSAVYTFYDPDEEQRSLGRYAILWQIAETERLGLQAVYLGYWIKNCRKMNYKTQYRPIELFVNQRWVALT.

It belongs to the R-transferase family. Bpt subfamily.

Its subcellular location is the cytoplasm. It catalyses the reaction N-terminal L-glutamyl-[protein] + L-leucyl-tRNA(Leu) = N-terminal L-leucyl-L-glutamyl-[protein] + tRNA(Leu) + H(+). The enzyme catalyses N-terminal L-aspartyl-[protein] + L-leucyl-tRNA(Leu) = N-terminal L-leucyl-L-aspartyl-[protein] + tRNA(Leu) + H(+). Functionally, functions in the N-end rule pathway of protein degradation where it conjugates Leu from its aminoacyl-tRNA to the N-termini of proteins containing an N-terminal aspartate or glutamate. This chain is Aspartate/glutamate leucyltransferase, found in Pseudomonas aeruginosa (strain LESB58).